The sequence spans 190 residues: Recombination protein RecR (190 aa).

The C4-type zinc finger occupies 58–73; sequence CEQCGALSENELCEIC. The region spanning 81–167 is the Toprim domain; it reads NILCIVESPK…TFSKIAQGIP (87 aa).

Belongs to the RecR family.

Functionally, may play a role in DNA repair. It seems to be involved in an RecBC-independent recombinational process of DNA repair. It may act with RecF and RecO. This chain is Recombination protein RecR, found in Campylobacter jejuni subsp. jejuni serotype O:23/36 (strain 81-176).